We begin with the raw amino-acid sequence, 144 residues long: MKTYNIVIASDHSGYELKSKIINYLEQKCLNIYDCGTQDTQTVDYPDYAKKVVDIIIEKAAPIGILISDTGIGMSIAANRSSEIRAALCNDILTAENAKAHNDANILILGAKSVDNKIVFNIIDKFLTTKFEGGRHSTRLSKIK.

His12 contributes to the substrate binding site. The Proton donor role is filled by His101. Arg135 contacts substrate.

It belongs to the LacAB/RpiB family.

The sequence is that of Putative sugar phosphate isomerase RT0290 from Rickettsia typhi (strain ATCC VR-144 / Wilmington).